A 510-amino-acid polypeptide reads, in one-letter code: Solute carrier family 2, facilitated glucose transporter member 2 (510 aa).

Topologically, residues 1-10 are cytoplasmic; sequence MTEDKVTGTL. A helical transmembrane segment spans residues 11–31; sequence VLAVFTAVLSSFQFGYDIGVI. The Extracellular segment spans residues 32–96; the sequence is NAPQQVIITH…SASLITMFWS (65 aa). Asparagine 62 carries N-linked (GlcNAc...) asparagine glycosylation. Residues 97-117 form a helical membrane-spanning segment; it reads LSVSSFAVGGMIASFFGGLLG. The Cytoplasmic segment spans residues 118-122; the sequence is DKLGR. The chain crosses the membrane as a helical span at residues 123–143; it reads IKALLVANILSLVGALLMGFS. The Extracellular portion of the chain corresponds to 144–157; it reads KLGPSHILIISGRG. The chain crosses the membrane as a helical span at residues 158 to 178; the sequence is ISGLYCGLISGLIPMYIGEIA. The Cytoplasmic portion of the chain corresponds to 179–191; it reads PTTLRGAIGALHQ. Glutamine 191 lines the D-glucose pocket. Residues 192-212 form a helical membrane-spanning segment; the sequence is LAIVTGILISQIVGLDFILGN. The Extracellular portion of the chain corresponds to 213–215; it reads HEL. Residues 216-236 form a helical membrane-spanning segment; sequence WHILLGLSAVPAILQCLLLFF. Residues 237–301 are Cytoplasmic-facing; sequence CPESPRYLYI…LFTNASYRQP (65 aa). The chain crosses the membrane as a helical span at residues 302–322; it reads ILVALMLHAAQQFSGINGIFY. D-glucose is bound by residues 312-313 and asparagine 318; that span reads QQ. Topologically, residues 323-336 are extracellular; the sequence is YSTSIFQTAGISQP. The chain crosses the membrane as a helical span at residues 337–357; that stretch reads VYATIGVGAVNTVFTAVSVFL. D-glucose is bound at residue asparagine 347. Over 358–365 the chain is Cytoplasmic; that stretch reads VEKAGRRS. The helical transmembrane segment at 366 to 386 threads the bilayer; the sequence is LFLIGMSGMFVCAIFMSVGLV. The Extracellular segment spans residues 387–400; that stretch reads LLSKFPWMNYVSMT. The helical transmembrane segment at 401–421 threads the bilayer; sequence AIFLFVSFFEIGPGPIPWFMV. D-glucose contacts are provided by glutamate 410 and tryptophan 418. Topologically, residues 422-431 are cytoplasmic; the sequence is AEFFSQGPRP. The helical transmembrane segment at 432-452 threads the bilayer; it reads AALAIAAFSNWTGNFIIALCF. The Extracellular portion of the chain corresponds to 453–454; the sequence is QY. Residues 455–475 form a helical membrane-spanning segment; that stretch reads IADFCGPYVFFLLLVWSWPLF. Over 476–510 the chain is Cytoplasmic; it reads CSHFLKFQKPKENPLRKSQQSSERRGVQLKRQKLL. Positions 490–510 are disordered; sequence LRKSQQSSERRGVQLKRQKLL.

It belongs to the major facilitator superfamily. Sugar transporter (TC 2.A.1.1) family. Glucose transporter subfamily. N-glycosylated; required for stability and retention at the cell surface of pancreatic beta cells.

The protein resides in the cell membrane. It catalyses the reaction D-glucose(out) = D-glucose(in). The enzyme catalyses D-fructose(out) = D-fructose(in). The catalysed reaction is L-dehydroascorbate(out) = L-dehydroascorbate(in). It carries out the reaction D-galactose(in) = D-galactose(out). D-glucose and maltose competitively inhibit fructose transport. D-glucose, D-fructose and maltose inhibit deoxyglucose transport. Facilitative hexose transporter that mediates the transport of glucose, fructose and galactose. Likely mediates the bidirectional transfer of glucose across the plasma membrane of hepatocytes and is responsible for uptake of glucose by the beta cells; may comprise part of the glucose-sensing mechanism of the beta cell. May also participate with the Na(+)/glucose cotransporter in the transcellular transport of glucose in the small intestine and kidney. Also able to mediate the transport of dehydroascorbate. This chain is Solute carrier family 2, facilitated glucose transporter member 2, found in Bos taurus (Bovine).